Consider the following 337-residue polypeptide: UDP-3-O-acylglucosamine N-acyltransferase (337 aa).

Catalysis depends on H238, which acts as the Proton acceptor.

This sequence belongs to the transferase hexapeptide repeat family. LpxD subfamily. In terms of assembly, homotrimer.

It carries out the reaction a UDP-3-O-[(3R)-3-hydroxyacyl]-alpha-D-glucosamine + a (3R)-hydroxyacyl-[ACP] = a UDP-2-N,3-O-bis[(3R)-3-hydroxyacyl]-alpha-D-glucosamine + holo-[ACP] + H(+). Its pathway is bacterial outer membrane biogenesis; LPS lipid A biosynthesis. Catalyzes the N-acylation of UDP-3-O-acylglucosamine using 3-hydroxyacyl-ACP as the acyl donor. Is involved in the biosynthesis of lipid A, a phosphorylated glycolipid that anchors the lipopolysaccharide to the outer membrane of the cell. The polypeptide is UDP-3-O-acylglucosamine N-acyltransferase (Xanthomonas campestris pv. campestris (strain 8004)).